The sequence spans 657 residues: Glycogen debranching enzyme (657 aa).

Aspartate 336 functions as the Nucleophile in the catalytic mechanism. Catalysis depends on glutamate 371, which acts as the Proton donor. Over residues 458-467 (NEANGEENRD) the composition is skewed to basic and acidic residues. The disordered stretch occupies residues 458–479 (NEANGEENRDGTNNNYSNNHGK).

This sequence belongs to the glycosyl hydrolase 13 family.

It catalyses the reaction Hydrolysis of (1-&gt;6)-alpha-D-glucosidic linkages to branches with degrees of polymerization of three or four glucose residues in limit dextrin.. It functions in the pathway glycan degradation; glycogen degradation. Functionally, removes maltotriose and maltotetraose chains that are attached by 1,6-alpha-linkage to the limit dextrin main chain, generating a debranched limit dextrin. This Escherichia coli O8 (strain IAI1) protein is Glycogen debranching enzyme.